Here is a 701-residue protein sequence, read N- to C-terminus: Glycine--tRNA ligase beta subunit (701 aa).

It belongs to the class-II aminoacyl-tRNA synthetase family. In terms of assembly, tetramer of two alpha and two beta subunits.

It localises to the cytoplasm. The catalysed reaction is tRNA(Gly) + glycine + ATP = glycyl-tRNA(Gly) + AMP + diphosphate. The protein is Glycine--tRNA ligase beta subunit of Helicobacter pylori (strain HPAG1).